The sequence spans 852 residues: Lon protease homolog 2, peroxisomal (852 aa).

The residue at position 2 (Ser2) is an N-acetylserine. A Lon N-terminal domain is found at Leu13–Ile222. ATP is bound at residue Gly375–Thr382. Residues Leu651–Gly837 enclose the Lon proteolytic domain. Catalysis depends on residues Ser743 and Lys786. A Microbody targeting signal motif is present at residues Ser850–Leu852.

This sequence belongs to the peptidase S16 family. In terms of assembly, interacts with PEX5. Interacts with TYSND1. May interact with enzymes involved in beta-oxidation of fatty acids, including ACOX1/AOX.

Its subcellular location is the peroxisome matrix. The catalysed reaction is Hydrolysis of proteins in presence of ATP.. Functionally, ATP-dependent serine protease that mediates the selective degradation of misfolded and unassembled polypeptides in the peroxisomal matrix. Necessary for type 2 peroxisome targeting signal (PTS2)-containing protein processing and facilitates peroxisome matrix protein import. May indirectly regulate peroxisomal fatty acid beta-oxidation through degradation of the self-processed forms of TYSND1. The polypeptide is Lon protease homolog 2, peroxisomal (Lonp2) (Rattus norvegicus (Rat)).